The chain runs to 232 residues: Chalcone--flavanone isomerase (232 aa).

2 residues coordinate substrate: T50 and S192.

It belongs to the chalcone isomerase family.

The enzyme catalyses a chalcone = a flavanone.. It participates in secondary metabolite biosynthesis; flavonoid biosynthesis. Functionally, catalyzes the intramolecular cyclization of bicyclic chalcones into tricyclic (S)-flavanones. Responsible for the isomerization of 4,2',4',6'-tetrahydroxychalcone (also termed chalcone) into naringenin. The sequence is that of Chalcone--flavanone isomerase (CHI) from Saussurea medusa (Saw-wort).